The chain runs to 104 residues: Sweet protein mabinlin-1 (104 aa).

Intrachain disulfides connect Cys4–Cys53, Cys17–Cys42, Cys43–Cys91, and Cys55–Cys99.

The protein belongs to the 2S seed storage albumins family. Heterodimer of a small A and a large B chain linked by disulfide bonds.

2S seed storage protein having sweetness-inducing activity. This form is not heat stable. This chain is Sweet protein mabinlin-1, found in Capparis masaikai (Mabinlang).